The sequence spans 449 residues: Phosphoglucosamine mutase (449 aa).

Residue S101 is the Phosphoserine intermediate of the active site. The Mg(2+) site is built by S101, D241, D243, and D245. S101 carries the phosphoserine modification.

The protein belongs to the phosphohexose mutase family. The cofactor is Mg(2+). In terms of processing, activated by phosphorylation.

The enzyme catalyses alpha-D-glucosamine 1-phosphate = D-glucosamine 6-phosphate. In terms of biological role, catalyzes the conversion of glucosamine-6-phosphate to glucosamine-1-phosphate. The protein is Phosphoglucosamine mutase of Alkaliphilus oremlandii (strain OhILAs) (Clostridium oremlandii (strain OhILAs)).